The primary structure comprises 89 residues: Extender of the chronological lifespan protein ecl3 (89 aa).

This sequence belongs to the ecl1 family.

The protein localises to the nucleus. Its function is as follows. Involved in chronological cell aging. The polypeptide is Extender of the chronological lifespan protein ecl3 (ecl3) (Schizosaccharomyces pombe (strain 972 / ATCC 24843) (Fission yeast)).